Here is a 115-residue protein sequence, read N- to C-terminus: Translation initiation factor 1A 2 (115 aa).

A disordered region spans residues 1-34; that stretch reads MANYRSTIRHRNSGSRKSVSGDTHEVTRVRTPQK. A compositionally biased stretch (basic and acidic residues) spans 22–34; sequence DTHEVTRVRTPQK. One can recognise an S1-like domain in the interval 27–101; it reads TRVRTPQKDR…SKADVTWKYT (75 aa).

The protein belongs to the eIF-1A family.

In terms of biological role, seems to be required for maximal rate of protein biosynthesis. Enhances ribosome dissociation into subunits and stabilizes the binding of the initiator Met-tRNA(I) to 40 S ribosomal subunits. This is Translation initiation factor 1A 2 from Methanosarcina barkeri (strain Fusaro / DSM 804).